The following is a 79-amino-acid chain: Dolichyl-diphosphooligosaccharide--protein glycosyltransferase subunit TMEM258 (79 aa).

The next 2 helical transmembrane spans lie at 17-37 (VFPH…AWFF) and 59-79 (VASL…GIFV).

This sequence belongs to the OST5 family. As to quaternary structure, component of the oligosaccharyltransferase (OST) complex.

Its subcellular location is the membrane. It is found in the endoplasmic reticulum. It localises to the cytoplasm. It functions in the pathway protein modification; protein glycosylation. Functionally, subunit of the oligosaccharyl transferase (OST) complex that catalyzes the initial transfer of a defined glycan (Glc(3)Man(9)GlcNAc(2) in eukaryotes) from the lipid carrier dolichol-pyrophosphate to an asparagine residue within an Asn-X-Ser/Thr consensus motif in nascent polypeptide chains, the first step in protein N-glycosylation. N-glycosylation occurs cotranslationally and the complex associates with the Sec61 complex at the channel-forming translocon complex that mediates protein translocation across the endoplasmic reticulum (ER). All subunits are required for a maximal enzyme activity. This is Dolichyl-diphosphooligosaccharide--protein glycosyltransferase subunit TMEM258 from Danio rerio (Zebrafish).